The following is a 164-amino-acid chain: Protein SprT (164 aa).

One can recognise a SprT-like domain in the interval 14-156 (QLAESFFKRP…LCRRCRNTLV (143 aa)). His-69 contributes to the Zn(2+) binding site. The active site involves Glu-70. His-73 contributes to the Zn(2+) binding site.

It belongs to the SprT family. Zn(2+) is required as a cofactor.

The protein localises to the cytoplasm. The sequence is that of Protein SprT from Pseudomonas fluorescens (strain Pf0-1).